The primary structure comprises 161 residues: Protein-export protein SecB (161 aa).

It belongs to the SecB family. Homotetramer, a dimer of dimers. One homotetramer interacts with 1 SecA dimer.

It localises to the cytoplasm. In terms of biological role, one of the proteins required for the normal export of preproteins out of the cell cytoplasm. It is a molecular chaperone that binds to a subset of precursor proteins, maintaining them in a translocation-competent state. It also specifically binds to its receptor SecA. The polypeptide is Protein-export protein SecB (Shewanella sp. (strain ANA-3)).